The following is a 259-amino-acid chain: L-cysteine S-thiosulfotransferase subunit SoxA (259 aa).

Residues 1-23 (MRKLWFLPILLGAVGGVSLYAIA) form the signal peptide. The region spanning 50 to 135 (VYAEQGRDMF…SIATYVATLS (86 aa)) is the Cytochrome c domain. The heme c site is built by C70, C73, H74, C108, C171, C174, and H175. Substrate is bound at residue R216. C220 provides a ligand contact to heme c. The Cysteine persulfide intermediate role is filled by C220.

It belongs to the SoxA family. Heterodimer of SoxA and SoxX. It depends on heme c as a cofactor. Post-translationally, cysteine persulfide at Cys-220.

It localises to the periplasm. It catalyses the reaction L-cysteinyl-[SoxY protein] + thiosulfate + 2 Fe(III)-[cytochrome c] = S-sulfosulfanyl-L-cysteinyl-[SoxY protein] + 2 Fe(II)-[cytochrome c] + 2 H(+). The catalysed reaction is S-sulfanyl-L-cysteinyl-[SoxY protein] + thiosulfate + 2 Fe(III)-[cytochrome c] = S-(2-sulfodisulfanyl)-L-cysteinyl-[SoxY protein] + 2 Fe(II)-[cytochrome c] + 2 H(+). Functionally, C-type diheme cytochrome, which is part of the SoxAX cytochrome complex involved in sulfur oxidation. The SoxAX complex catalyzes the formation of a heterodisulfide bond between the conserved cysteine residue on a sulfur carrier SoxYZ complex subunit SoxY and thiosulfate or other inorganic sulfur substrates. This leads to the liberation of two electrons, which may be transferred from the SoxAX complex to another cytochrome c that then channels them into the respiratory electron transport chain. Some electrons may be used for reductive CO(2) fixation. In Hydrogenobacter thermophilus (strain DSM 6534 / IAM 12695 / TK-6), this protein is L-cysteine S-thiosulfotransferase subunit SoxA.